Reading from the N-terminus, the 1388-residue chain is DNA-directed RNA polymerase subunit beta'' (1388 aa).

The Zn(2+) site is built by Cys224, Cys294, Cys301, and Cys304.

It belongs to the RNA polymerase beta' chain family. RpoC2 subfamily. In terms of assembly, in plastids the minimal PEP RNA polymerase catalytic core is composed of four subunits: alpha, beta, beta', and beta''. When a (nuclear-encoded) sigma factor is associated with the core the holoenzyme is formed, which can initiate transcription. Zn(2+) is required as a cofactor.

Its subcellular location is the plastid. It localises to the chloroplast. The enzyme catalyses RNA(n) + a ribonucleoside 5'-triphosphate = RNA(n+1) + diphosphate. Functionally, DNA-dependent RNA polymerase catalyzes the transcription of DNA into RNA using the four ribonucleoside triphosphates as substrates. This chain is DNA-directed RNA polymerase subunit beta'', found in Phalaenopsis aphrodite subsp. formosana (Moth orchid).